Here is a 217-residue protein sequence, read N- to C-terminus: ATP-dependent Clp protease proteolytic subunit (217 aa).

Catalysis depends on Ser121, which acts as the Nucleophile. His146 is a catalytic residue.

Belongs to the peptidase S14 family. Fourteen ClpP subunits assemble into 2 heptameric rings which stack back to back to give a disk-like structure with a central cavity, resembling the structure of eukaryotic proteasomes.

It localises to the cytoplasm. It catalyses the reaction Hydrolysis of proteins to small peptides in the presence of ATP and magnesium. alpha-casein is the usual test substrate. In the absence of ATP, only oligopeptides shorter than five residues are hydrolyzed (such as succinyl-Leu-Tyr-|-NHMec, and Leu-Tyr-Leu-|-Tyr-Trp, in which cleavage of the -Tyr-|-Leu- and -Tyr-|-Trp bonds also occurs).. Its function is as follows. Cleaves peptides in various proteins in a process that requires ATP hydrolysis. Has a chymotrypsin-like activity. Plays a major role in the degradation of misfolded proteins. In Burkholderia vietnamiensis (strain G4 / LMG 22486) (Burkholderia cepacia (strain R1808)), this protein is ATP-dependent Clp protease proteolytic subunit.